We begin with the raw amino-acid sequence, 80 residues long: Anaphase-promoting complex subunit hcn1 (80 aa).

The residue at position 1 (Met-1) is an N-acetylmethionine. The segment at 26–54 is disordered; it reads QTLDSESTTEEALQKNEESTRLSPEKKKI. A compositionally biased stretch (basic and acidic residues) spans 37-54; that stretch reads ALQKNEESTRLSPEKKKI.

In terms of assembly, the APC/C is composed of at least 13 subunits: apc1, apc2, nuc2, apc4, apc5, cut9, apc8, apc10, apc11, hcn1, apc13, apc14 and apc15. Interacts directly (via N-terminus) with cut9.

In terms of biological role, component of the anaphase promoting complex/cyclosome (APC/C), a cell cycle-regulated E3 ubiquitin-protein ligase complex that controls progression through mitosis and the G1 phase of the cell cycle. The APC/C is thought to confer substrate specificity and, in the presence of ubiquitin-conjugating E2 enzymes, it catalyzes the formation of protein-ubiquitin conjugates that are subsequently degraded by the 26S proteasome. Has a role in assembling cut9 in the 20S APC/cyclosome. This is Anaphase-promoting complex subunit hcn1 (hcn1) from Schizosaccharomyces pombe (strain 972 / ATCC 24843) (Fission yeast).